The primary structure comprises 506 residues: ATP synthase subunit alpha (506 aa).

171 to 178 (GDRKTGKT) is a binding site for ATP.

The protein belongs to the ATPase alpha/beta chains family. F-type ATPases have 2 components, CF(1) - the catalytic core - and CF(0) - the membrane proton channel. CF(1) has five subunits: alpha(3), beta(3), gamma(1), delta(1), epsilon(1). CF(0) has three main subunits: a(1), b(2) and c(9-12). The alpha and beta chains form an alternating ring which encloses part of the gamma chain. CF(1) is attached to CF(0) by a central stalk formed by the gamma and epsilon chains, while a peripheral stalk is formed by the delta and b chains.

The protein localises to the cell inner membrane. The catalysed reaction is ATP + H2O + 4 H(+)(in) = ADP + phosphate + 5 H(+)(out). Functionally, produces ATP from ADP in the presence of a proton gradient across the membrane. The alpha chain is a regulatory subunit. The polypeptide is ATP synthase subunit alpha (Anaplasma phagocytophilum (strain HZ)).